The primary structure comprises 219 residues: Proteasome subunit beta (219 aa).

Residues 1–14 constitute a propeptide, removed in mature form; by autocatalysis; it reads MISNSEYHKEYMKG. Catalysis depends on Thr-15, which acts as the Nucleophile.

This sequence belongs to the peptidase T1B family. The 20S proteasome core is composed of 14 alpha and 14 beta subunits that assemble into four stacked heptameric rings, resulting in a barrel-shaped structure. The two inner rings, each composed of seven catalytic beta subunits, are sandwiched by two outer rings, each composed of seven alpha subunits. The catalytic chamber with the active sites is on the inside of the barrel. Has a gated structure, the ends of the cylinder being occluded by the N-termini of the alpha-subunits. Is capped at one or both ends by the proteasome regulatory ATPase, PAN.

It is found in the cytoplasm. It carries out the reaction Cleavage of peptide bonds with very broad specificity.. Its activity is regulated as follows. The formation of the proteasomal ATPase PAN-20S proteasome complex, via the docking of the C-termini of PAN into the intersubunit pockets in the alpha-rings, triggers opening of the gate for substrate entry. Interconversion between the open-gate and close-gate conformations leads to a dynamic regulation of the 20S proteasome proteolysis activity. In terms of biological role, component of the proteasome core, a large protease complex with broad specificity involved in protein degradation. The chain is Proteasome subunit beta from Methanococcus maripaludis (strain C5 / ATCC BAA-1333).